A 446-amino-acid chain; its full sequence is Argininosuccinate synthase (446 aa).

ATP is bound by residues 17-25 (AFSGGLDTS) and A43. Y99 is an L-citrulline binding site. ATP is bound by residues G129 and T131. Residues T131, N135, and D136 each coordinate L-aspartate. N135 is a binding site for L-citrulline. Residue D136 participates in ATP binding. 2 residues coordinate L-citrulline: R139 and S192. ATP is bound at residue D194. L-citrulline-binding residues include T201, E203, and E280.

It belongs to the argininosuccinate synthase family. Type 2 subfamily. Homotetramer.

It localises to the cytoplasm. It catalyses the reaction L-citrulline + L-aspartate + ATP = 2-(N(omega)-L-arginino)succinate + AMP + diphosphate + H(+). It participates in amino-acid biosynthesis; L-arginine biosynthesis; L-arginine from L-ornithine and carbamoyl phosphate: step 2/3. This chain is Argininosuccinate synthase, found in Polaromonas sp. (strain JS666 / ATCC BAA-500).